The following is a 431-amino-acid chain: uncharacterized protein (431 aa).

The next 2 helical transmembrane spans lie at 42–62 (LLIG…IGCL) and 74–94 (VMIF…ATML). A glycan (N-linked (GlcNAc...) asparagine; by host) is linked at N105. A run of 5 helical transmembrane segments spans residues 111 to 131 (LVLF…LFLI), 153 to 173 (AGVA…AAVP), 202 to 222 (MWFL…ELAY), 236 to 256 (VCTF…FRVL), and 279 to 299 (ATRT…IAFF).

The protein resides in the membrane. This is an uncharacterized protein from Homo sapiens (Human).